We begin with the raw amino-acid sequence, 398 residues long: Acetate kinase (398 aa).

Asn-9 lines the Mg(2+) pocket. Lys-16 is a binding site for ATP. Arg-93 serves as a coordination point for substrate. Catalysis depends on Asp-150, which acts as the Proton donor/acceptor. Residues 209–213 (HLGAG), 284–286 (DMR), and 329–333 (GIGEH) contribute to the ATP site. Glu-382 is a Mg(2+) binding site.

It belongs to the acetokinase family. As to quaternary structure, homodimer. It depends on Mg(2+) as a cofactor. Requires Mn(2+) as cofactor.

The protein localises to the cytoplasm. It carries out the reaction acetate + ATP = acetyl phosphate + ADP. It participates in metabolic intermediate biosynthesis; acetyl-CoA biosynthesis; acetyl-CoA from acetate: step 1/2. Functionally, catalyzes the formation of acetyl phosphate from acetate and ATP. Can also catalyze the reverse reaction. In Rhodopseudomonas palustris (strain TIE-1), this protein is Acetate kinase.